We begin with the raw amino-acid sequence, 236 residues long: uncharacterized protein (236 aa).

The 233-residue stretch at 4 to 236 folds into the GP-PDE domain; sequence QFLIAYRGYS…VKFQITAQIY (233 aa).

To glycerophosphoryl diester phosphodiesterases (EC 3.1.4.46). This sequence to M.genitalium MG293.

This is an uncharacterized protein from Mycoplasma genitalium (strain ATCC 33530 / DSM 19775 / NCTC 10195 / G37) (Mycoplasmoides genitalium).